Consider the following 435-residue polypeptide: Adenylosuccinate synthetase (435 aa).

Residues 11-17 and 39-41 each bind GTP; these read GDEGKGK and GHT. D12 acts as the Proton acceptor in catalysis. Positions 12 and 39 each coordinate Mg(2+). IMP is bound by residues 12–15, 37–40, T128, R142, Q223, T238, and R302; these read DEGK and NAGH. Residue H40 is the Proton donor of the active site. A substrate-binding site is contributed by 298–304; it reads SVTGRPR. GTP-binding positions include R304, 330–332, and 412–414; these read KLD and STG.

The protein belongs to the adenylosuccinate synthetase family. In terms of assembly, homodimer. The cofactor is Mg(2+).

Its subcellular location is the cytoplasm. It carries out the reaction IMP + L-aspartate + GTP = N(6)-(1,2-dicarboxyethyl)-AMP + GDP + phosphate + 2 H(+). Its pathway is purine metabolism; AMP biosynthesis via de novo pathway; AMP from IMP: step 1/2. In terms of biological role, plays an important role in the de novo pathway of purine nucleotide biosynthesis. Catalyzes the first committed step in the biosynthesis of AMP from IMP. This Coxiella burnetii (strain CbuK_Q154) (Coxiella burnetii (strain Q154)) protein is Adenylosuccinate synthetase.